Here is a 458-residue protein sequence, read N- to C-terminus: MTATKGRNVVVVGTQWGDEGKGKLVDWLTQSAQGVVRFQGGHNAGHTLVINGVKTALHLIPSGIMRPGVKCYIGNGVVLSAAKLFEEIEGLEKAGVEVRSRLRISEACPLILPFHAAIDIAREAAREQGGAEKIGTTGRGIGPAYEDKIARRALRVQDLKHPERFAARLRELLDLHNHLLTTYLGSATFVFDAALKPYIEAGKVQFDVVHAEAMRHAELLKPMMADVSRELNEAHRAGINLLFEGAQGTLLDVDHGTYPYVTSSNCVAGNAAAGSGVGPGMLHYILGITKAYCTRVGGGPFPTELDWQVPGTPGYHMSLVGAEKGVTTGRSRRCGWFDAALLKRSAQVNGLSGLCITKLDVLDGLAELRLCTGYELDGARIDLPPMGAEDIIRCRPIYETLPGWSESTVGVTDYAKLPQNARRYLERIEQVTGVPIDLISTSPDRDHTIMMRHPYDAG.

Residues 17–23 and 45–47 contribute to the GTP site; these read GDEGKGK and GHT. The Proton acceptor role is filled by aspartate 18. Residues aspartate 18 and glycine 45 each contribute to the Mg(2+) site. IMP contacts are provided by residues 18 to 21, 43 to 46, threonine 137, arginine 151, glutamine 247, threonine 262, and arginine 330; these read DEGK and NAGH. Histidine 46 (proton donor) is an active-site residue. 326–332 is a substrate binding site; the sequence is VTTGRSR. GTP is bound by residues arginine 332, 358 to 360, and 440 to 442; these read KLD and STS.

Belongs to the adenylosuccinate synthetase family. As to quaternary structure, homodimer. Requires Mg(2+) as cofactor.

Its subcellular location is the cytoplasm. The enzyme catalyses IMP + L-aspartate + GTP = N(6)-(1,2-dicarboxyethyl)-AMP + GDP + phosphate + 2 H(+). The protein operates within purine metabolism; AMP biosynthesis via de novo pathway; AMP from IMP: step 1/2. Its function is as follows. Plays an important role in the de novo pathway of purine nucleotide biosynthesis. Catalyzes the first committed step in the biosynthesis of AMP from IMP. The chain is Adenylosuccinate synthetase from Verminephrobacter eiseniae (strain EF01-2).